A 223-amino-acid polypeptide reads, in one-letter code: Small ribosomal subunit protein uS3 (223 aa).

One can recognise a KH type-2 domain in the interval 40–108 (IRELVHRELP…KVHLNIQEIR (69 aa)).

Belongs to the universal ribosomal protein uS3 family. Part of the 30S ribosomal subunit. Forms a tight complex with proteins S10 and S14.

Its function is as follows. Binds the lower part of the 30S subunit head. Binds mRNA in the 70S ribosome, positioning it for translation. The chain is Small ribosomal subunit protein uS3 from Thermomicrobium roseum (strain ATCC 27502 / DSM 5159 / P-2).